A 500-amino-acid chain; its full sequence is NAD(P)H-quinone oxidoreductase chain 4, chloroplastic (500 aa).

Helical transmembrane passes span Phe4 to Phe24, Tyr35 to Phe55, Ile87 to Val107, Leu113 to Ser130, Leu134 to Met154, Phe167 to Leu187, Ala208 to Ile228, His242 to Val262, Ala272 to Ala292, Ile305 to Asp325, Gly330 to Gly350, Leu386 to Thr406, Ile416 to Met436, and Phe463 to Phe483.

It belongs to the complex I subunit 4 family.

It is found in the plastid. The protein localises to the chloroplast thylakoid membrane. The catalysed reaction is a plastoquinone + NADH + (n+1) H(+)(in) = a plastoquinol + NAD(+) + n H(+)(out). It carries out the reaction a plastoquinone + NADPH + (n+1) H(+)(in) = a plastoquinol + NADP(+) + n H(+)(out). The sequence is that of NAD(P)H-quinone oxidoreductase chain 4, chloroplastic from Nandina domestica (Heavenly bamboo).